A 434-amino-acid polypeptide reads, in one-letter code: Nicotinate phosphoribosyltransferase (434 aa).

Histidine 242 is subject to Phosphohistidine; by autocatalysis.

This sequence belongs to the NAPRTase family. Transiently phosphorylated on a His residue during the reaction cycle. Phosphorylation strongly increases the affinity for substrates and increases the rate of nicotinate D-ribonucleotide production. Dephosphorylation regenerates the low-affinity form of the enzyme, leading to product release.

It catalyses the reaction nicotinate + 5-phospho-alpha-D-ribose 1-diphosphate + ATP + H2O = nicotinate beta-D-ribonucleotide + ADP + phosphate + diphosphate. Its pathway is cofactor biosynthesis; NAD(+) biosynthesis; nicotinate D-ribonucleotide from nicotinate: step 1/1. Its function is as follows. Catalyzes the synthesis of beta-nicotinate D-ribonucleotide from nicotinate and 5-phospho-D-ribose 1-phosphate at the expense of ATP. This chain is Nicotinate phosphoribosyltransferase, found in Bradyrhizobium sp. (strain BTAi1 / ATCC BAA-1182).